The chain runs to 293 residues: Mating-type protein A-1 (293 aa).

The alpha box DNA-binding region spans 42–97 (AAKKKVNGFMGFRSYYSPLFSQLPQKERSPFMTILWQHDPFHNEWDFMCSVYSSIR).

This sequence belongs to the MATALPHA1 family.

The protein localises to the nucleus. Mating type proteins are sequence specific DNA-binding proteins that act as master switches in yeast differentiation by controlling gene expression in a cell type-specific fashion. Transcriptional activator that induces the transcription of A-specific genes like mating factor ccg-4. Required for mating as an A-cell and for blocking of heterokaryon formation (vegetative incompatibility). The polypeptide is Mating-type protein A-1 (mtA-1) (Neurospora crassa (strain ATCC 24698 / 74-OR23-1A / CBS 708.71 / DSM 1257 / FGSC 987)).